Consider the following 60-residue polypeptide: Probable tautomerase SP_1017 (60 aa).

Pro2 acts as the Proton acceptor; via imino nitrogen in catalysis.

It belongs to the 4-oxalocrotonate tautomerase family.

In Streptococcus pneumoniae serotype 4 (strain ATCC BAA-334 / TIGR4), this protein is Probable tautomerase SP_1017.